Consider the following 154-residue polypeptide: MGVLTDVQVALVKSSFEEFNANIPKNTHRFFTLVLEIAPGAKDLFSFLKGSSEVPQNNPDLQAHAGKVFKLTYEAAIQLQVNGAVASDATLKSLGSVHVSKGVVDAHFPVVKEAILKTIKEVVGDKWSEELNTAWTIAYDELAIIIKKEMKDAA.

The Globin domain maps to 3–151 (VLTDVQVALV…LAIIIKKEMK (149 aa)). Serine 46 contacts heme b. Serine 46 bears the Phosphoserine mark. Residue histidine 64 coordinates O2. 3 residues coordinate heme b: lysine 67, histidine 98, and lysine 101. Tyrosine 139 is subject to Nitrated tyrosine.

Belongs to the plant globin family. As to quaternary structure, monomer. Nitrated in effective nodules and particularly in hypoxic conditions; this mechanism may play a protective role in the symbiosis by buffering toxic peroxynitrite NO(2)(-). Nitration level decrease during nodule senescence. Post-translationally, phosphorylation at Ser-46 disrupts the molecular environment of its porphyrin ring oxygen binding pocket, thus leading to a reduced oxygen consumption and to the delivery of oxygen O(2) to symbiosomes. In terms of tissue distribution, accumulates in developing root nodules and present in roots, especially in the upper part. Detected in leaves at low levels.

It localises to the cytoplasm. The protein localises to the cytosol. It is found in the nucleus. Leghemoglobin that reversibly binds oxygen O(2) through a pentacoordinated heme iron. In root nodules, facilitates the diffusion of oxygen to the bacteroids while preventing the bacterial nitrogenase from being inactivated by buffering dioxygen, nitric oxide and carbon monoxide, and promoting the formation of reactive oxygen species (ROS, e.g. H(2)O(2)). This role is essential for symbiotic nitrogen fixation (SNF). This chain is Leghemoglobin-1, found in Lupinus luteus (European yellow lupine).